Reading from the N-terminus, the 144-residue chain is Ribosomal RNA large subunit methyltransferase H (144 aa).

Residues Leu63, Gly92, and 111-116 (LSPLTF) contribute to the S-adenosyl-L-methionine site.

It belongs to the RNA methyltransferase RlmH family. Homodimer.

Its subcellular location is the cytoplasm. The catalysed reaction is pseudouridine(1915) in 23S rRNA + S-adenosyl-L-methionine = N(3)-methylpseudouridine(1915) in 23S rRNA + S-adenosyl-L-homocysteine + H(+). Specifically methylates the pseudouridine at position 1915 (m3Psi1915) in 23S rRNA. In Synechococcus sp. (strain CC9902), this protein is Ribosomal RNA large subunit methyltransferase H.